Consider the following 288-residue polypeptide: Keratin-associated protein 5-4 (288 aa).

9 tandem repeats follow at residues 49–52 (CCVP), 55–58 (CCKP), 61–64 (CCVP), 201–204 (CCKP), 220–223 (CCKP), 239–242 (CCKP), 249–252 (CCKP), 268–271 (CCNP), and 278–281 (CCVP). Residues 49 to 281 (CCVPICCCKP…CCSQSSCCVP (233 aa)) are 9 X 4 AA repeats of C-C-X-P.

Belongs to the KRTAP type 5 family. Interacts with hair keratins. As to expression, restricted to hair root, not detected in any other tissues.

Functionally, in the hair cortex, hair keratin intermediate filaments are embedded in an interfilamentous matrix, consisting of hair keratin-associated protein (KRTAP), which are essential for the formation of a rigid and resistant hair shaft through their extensive disulfide bond cross-linking with abundant cysteine residues of hair keratins. The matrix proteins include the high-sulfur and high-glycine-tyrosine keratins. The protein is Keratin-associated protein 5-4 (KRTAP5-4) of Homo sapiens (Human).